The chain runs to 302 residues: N-acetylmuramic acid 6-phosphate etherase (302 aa).

The 164-residue stretch at 57-220 folds into the SIS domain; it reads IADRFRSNGR…TTGAMIRIGK (164 aa). Glu85 acts as the Proton donor in catalysis. Residue Glu116 is part of the active site.

This sequence belongs to the GCKR-like family. MurNAc-6-P etherase subfamily. Homodimer.

It catalyses the reaction N-acetyl-D-muramate 6-phosphate + H2O = N-acetyl-D-glucosamine 6-phosphate + (R)-lactate. The protein operates within amino-sugar metabolism; N-acetylmuramate degradation. Its function is as follows. Specifically catalyzes the cleavage of the D-lactyl ether substituent of MurNAc 6-phosphate, producing GlcNAc 6-phosphate and D-lactate. This chain is N-acetylmuramic acid 6-phosphate etherase, found in Rhodopirellula baltica (strain DSM 10527 / NCIMB 13988 / SH1).